Reading from the N-terminus, the 249-residue chain is Proteasome activator complex subunit 1 (249 aa).

The tract at residues 55–102 (SNLKAPLDIPVPDPVKEKEKEERRKQQEKEDKDEKKKGEDEDKGPPCG) is disordered. Positions 68-98 (PVKEKEKEERRKQQEKEDKDEKKKGEDEDKG) are enriched in basic and acidic residues.

It belongs to the PA28 family. As to quaternary structure, heterodimer of PSME1 and PSME2, which forms a hexameric ring. PSME1 can form homoheptamers.

In terms of biological role, implicated in immunoproteasome assembly and required for efficient antigen processing. The PA28 activator complex enhances the generation of class I binding peptides by altering the cleavage pattern of the proteasome. The chain is Proteasome activator complex subunit 1 (PSME1) from Bos taurus (Bovine).